Here is a 419-residue protein sequence, read N- to C-terminus: Serine/threonine-protein kinase Kist (419 aa).

The Protein kinase domain maps to 23-304 (WQVQSRLGSG…AEMALCSPFF (282 aa)). ATP-binding positions include 29-37 (LGSGSSASV) and lysine 54. Residues aspartate 141 and aspartate 158 each act as proton acceptor in the active site. The RRM domain maps to 324–406 (RLLNVLDDDY…KFVVATFYPL (83 aa)).

This sequence belongs to the protein kinase superfamily. Ser/Thr protein kinase family. As to quaternary structure, interacts with stathmin and CDKN1B/p27Kip1 Interacts with PAM. In terms of tissue distribution, in the embryo, preferentially expressed in the developing nervous system.

The protein localises to the cytoplasm. It localises to the nucleus. The enzyme catalyses L-seryl-[protein] + ATP = O-phospho-L-seryl-[protein] + ADP + H(+). The catalysed reaction is L-threonyl-[protein] + ATP = O-phospho-L-threonyl-[protein] + ADP + H(+). In terms of biological role, upon serum stimulation, phosphorylates CDKN1B/p27Kip1, thus controlling CDKN1B subcellular location and cell cycle progression in G1 phase. May be involved in trafficking and/or processing of RNA. The protein is Serine/threonine-protein kinase Kist (Uhmk1) of Rattus norvegicus (Rat).